The sequence spans 309 residues: Probable cell wall protein PGA50 (309 aa).

The N-terminal stretch at 1 to 17 (MKLNLLLLLFIVELVAA) is a signal peptide. Residues Asn-67, Asn-115, Asn-248, Asn-267, and Asn-277 are each glycosylated (N-linked (GlcNAc...) asparagine). Residues 241 to 281 (STTTFSSNGTSSGTTNGDTRAETKSSNSTQTSSSDKNSSQI) form a disordered region. Residue Ser-286 is the site of GPI-anchor amidated serine attachment. Positions 287 to 309 (TGVANFVASFGMGTLLLFVLSLC) are cleaved as a propeptide — removed in mature form.

It belongs to the IHD1 family. Post-translationally, the GPI-anchor is attached to the protein in the endoplasmic reticulum and serves to target the protein to the cell surface. There, the glucosamine-inositol phospholipid moiety is cleaved off and the GPI-modified mannoprotein is covalently attached via its lipidless GPI glycan remnant to the 1,6-beta-glucan of the outer cell wall layer.

Its subcellular location is the secreted. It localises to the cell wall. The protein resides in the membrane. Functionally, probable GPI-anchored cell wall protein that may be involved in cell wall organization, hyphal growth, as well as in virulence. The chain is Probable cell wall protein PGA50 (PGA50) from Candida albicans (strain SC5314 / ATCC MYA-2876) (Yeast).